We begin with the raw amino-acid sequence, 142 residues long: Hemoglobin subunit alpha (142 aa).

The region spanning 2 to 142 (VLSAADKGNV…VSTVLTSKYR (141 aa)) is the Globin domain. A Phosphoserine modification is found at S4. Residues K8 and K12 each carry the N6-succinyllysine modification. K17 bears the N6-acetyllysine; alternate mark. At K17 the chain carries N6-succinyllysine; alternate. Y25 is modified (phosphotyrosine). A Phosphoserine modification is found at S36. At K41 the chain carries N6-succinyllysine. S50 is modified (phosphoserine). Residue H59 participates in O2 binding. Residue H88 participates in heme b binding. Position 103 is a phosphoserine (S103). T109 is modified (phosphothreonine). Phosphoserine is present on S125. Residues T135 and T138 each carry the phosphothreonine modification. The residue at position 139 (S139) is a Phosphoserine.

This sequence belongs to the globin family. Heterotetramer of two alpha chains and two beta chains. Red blood cells.

In terms of biological role, involved in oxygen transport from the lung to the various peripheral tissues. Functionally, hemopressin acts as an antagonist peptide of the cannabinoid receptor CNR1. Hemopressin-binding efficiently blocks cannabinoid receptor CNR1 and subsequent signaling. The chain is Hemoglobin subunit alpha (HBA) from Bos taurus (Bovine).